The sequence spans 355 residues: Protein RecA (355 aa).

Glycine 65–threonine 72 serves as a coordination point for ATP.

It belongs to the RecA family.

The protein localises to the cytoplasm. Functionally, can catalyze the hydrolysis of ATP in the presence of single-stranded DNA, the ATP-dependent uptake of single-stranded DNA by duplex DNA, and the ATP-dependent hybridization of homologous single-stranded DNAs. It interacts with LexA causing its activation and leading to its autocatalytic cleavage. The sequence is that of Protein RecA from Pseudomonas entomophila (strain L48).